Here is a 279-residue protein sequence, read N- to C-terminus: Phosphatidylglycerol--prolipoprotein diacylglyceryl transferase (279 aa).

3 helical membrane passes run 18-38 (LSVR…YFVA), 55-75 (IIFY…VIFQ), and 89-109 (IWHG…AGVI). Residue R137 coordinates a 1,2-diacyl-sn-glycero-3-phospho-(1'-sn-glycerol). The next 2 helical transmembrane spans lie at 203-223 (LGET…FIEG) and 235-255 (IRVA…LIVY).

Belongs to the Lgt family.

It is found in the cell membrane. The enzyme catalyses L-cysteinyl-[prolipoprotein] + a 1,2-diacyl-sn-glycero-3-phospho-(1'-sn-glycerol) = an S-1,2-diacyl-sn-glyceryl-L-cysteinyl-[prolipoprotein] + sn-glycerol 1-phosphate + H(+). Its pathway is protein modification; lipoprotein biosynthesis (diacylglyceryl transfer). In terms of biological role, catalyzes the transfer of the diacylglyceryl group from phosphatidylglycerol to the sulfhydryl group of the N-terminal cysteine of a prolipoprotein, the first step in the formation of mature lipoproteins. This chain is Phosphatidylglycerol--prolipoprotein diacylglyceryl transferase, found in Staphylococcus aureus (strain USA300).